A 198-amino-acid polypeptide reads, in one-letter code: Small ribosomal subunit protein uS7 (198 aa).

The protein belongs to the universal ribosomal protein uS7 family. Part of the 30S ribosomal subunit.

Functionally, one of the primary rRNA binding proteins, it binds directly to 16S rRNA where it nucleates assembly of the head domain of the 30S subunit. Is located at the subunit interface close to the decoding center. This is Small ribosomal subunit protein uS7 from Desulfurococcus amylolyticus (strain DSM 18924 / JCM 16383 / VKM B-2413 / 1221n) (Desulfurococcus kamchatkensis).